The primary structure comprises 188 residues: Elongation factor P (188 aa).

Belongs to the elongation factor P family.

The protein localises to the cytoplasm. The protein operates within protein biosynthesis; polypeptide chain elongation. Involved in peptide bond synthesis. Stimulates efficient translation and peptide-bond synthesis on native or reconstituted 70S ribosomes in vitro. Probably functions indirectly by altering the affinity of the ribosome for aminoacyl-tRNA, thus increasing their reactivity as acceptors for peptidyl transferase. This Aeromonas salmonicida (strain A449) protein is Elongation factor P.